An 82-amino-acid polypeptide reads, in one-letter code: M-zodatoxin-Lt3a (82 aa).

The N-terminal stretch at 1–22 (MKTYAVLLALVVAFVCIAESTG) is a signal peptide. A propeptide spanning residues 23-61 (YPVEDLEDDELTELEAEALLEDLLEDLELEDLDYNEEAR) is cleaved from the precursor. Positions 58–61 (EEAR) match the Processing quadruplet motif motif. Alanine 81 carries the post-translational modification Alanine amide.

This sequence belongs to the cationic peptide 03 (latarcin) family. 03 subfamily. Post-translationally, cleavage of the propeptide depends on the processing quadruplet motif (XXXR, with at least one of X being E). In terms of tissue distribution, expressed by the venom gland.

The protein localises to the secreted. It localises to the target cell membrane. In terms of biological role, it has antimicrobial activity against Gram-positive bacteria (A.globiformis VKM Ac-1112 (MIC=0.3 uM), and B.subtilis VKM B-501 (MIC=1.2 uM)), Gram-negative bacteria (E.coli DH5-alpha (MIC=2.5 uM), E.coli MH1 (MIC=6.0 uM), and P.aeruginosa PAO1 (MIC&gt;40 uM)), and yeasts (P.pastoris GS115 (MIC=20 uM), and S.cerevisiae Y190 (MIC=20 uM)). Causes paralysis, but is not lethal when injected into insect (M.domestica) larvae. A second study reports antibacterial activity against E.coli (MIC=100 uM) and S.aureus (MIC=84 uM). Furthermore, increases efficacy of antibiotics (chloramphenicol, streptomycin, kanamycin, novobiocin) when tested against E.coli, probably by facilitating their incorporation into the bacteria. This is M-zodatoxin-Lt3a from Lachesana tarabaevi (Spider).